The primary structure comprises 67 residues: Protein C' (67 aa).

Belongs to the rhabdoviruses C protein family.

In terms of biological role, seems to stimulates transcription by the viral polymerase. May play a role in viral pathogenesis or transmission by insects vectors. The polypeptide is Protein C' (P) (Aedes (Bovine)).